The primary structure comprises 370 residues: Anhydro-N-acetylmuramic acid kinase (370 aa).

12–19 serves as a coordination point for ATP; the sequence is GTSLDGVD.

It belongs to the anhydro-N-acetylmuramic acid kinase family.

The catalysed reaction is 1,6-anhydro-N-acetyl-beta-muramate + ATP + H2O = N-acetyl-D-muramate 6-phosphate + ADP + H(+). Its pathway is amino-sugar metabolism; 1,6-anhydro-N-acetylmuramate degradation. The protein operates within cell wall biogenesis; peptidoglycan recycling. Functionally, catalyzes the specific phosphorylation of 1,6-anhydro-N-acetylmuramic acid (anhMurNAc) with the simultaneous cleavage of the 1,6-anhydro ring, generating MurNAc-6-P. Is required for the utilization of anhMurNAc either imported from the medium or derived from its own cell wall murein, and thus plays a role in cell wall recycling. The sequence is that of Anhydro-N-acetylmuramic acid kinase from Pectobacterium atrosepticum (strain SCRI 1043 / ATCC BAA-672) (Erwinia carotovora subsp. atroseptica).